A 201-amino-acid polypeptide reads, in one-letter code: Thiamine transporter ThiT (201 aa).

6 helical membrane passes run 7–27 (LVVI…TYIP), 29–49 (TTGV…VLAM), 53–73 (LVPA…LRGI), 85–105 (ILEY…FASF), 124–144 (GIII…VVFW), and 170–190 (TVLT…LFVA).

Belongs to the vitamin uptake transporter (VUT/ECF) (TC 2.A.88) family. Thiamine transporter subfamily. In terms of assembly, in Lactococcus lactis subsp. cremoris (strain NZ9000) forms a stable energy-coupling factor (ECF) transporter complex probably composed of a membrane-embedded substrate-binding protein (S component), two ATP-binding proteins (A components) and a transmembrane protein (T component).

Its subcellular location is the cell membrane. Functionally, thiamine-binding protein that interacts with the energy-coupling factor (ECF) ABC-transporter complex. Unlike classic ABC transporters this ECF transporter provides the energy necessary to transport a number of different substrates. The substrates themselves are bound by transmembrane, not extracytoplasmic soluble proteins and transport it into cells. Binds thiamine with a dissociation constant of 0.5 nM. Upon coexpression with its energy-coupling factor (ECF) ABC-transporter complex EcfA1A2T in Lactococcus lactis subsp. cremoris (strain NZ9000) allows thiamine uptake; uptake requires both ThiT and EcfA1A2T. This is Thiamine transporter ThiT (thiT) from Lacticaseibacillus paracasei (strain ATCC 334 / BCRC 17002 / CCUG 31169 / CIP 107868 / KCTC 3260 / NRRL B-441) (Lactobacillus paracasei).